Here is a 616-residue protein sequence, read N- to C-terminus: MPKYRSATTTHGRNMAGARALWRATGMTDADFGKPIIAVVNSFTQFVPGHVHLRDLGKLVAEQIEAAGGVAKEFNTIAVDDGIAMGHGGMLYSLPSRELIADSVEYMVNAHCADAMVCISNCDKITPGMLMASLRLNIPVIFVSGGPMEAGKTKLSDQIIKLDLVDAMIQGADPKVSDSQSDQVERSACPTCGSCSGMFTANSMNCLTEALGLSQPGNGSLLATHADRKQLFLNAGKRIVELTKRYYEQNDESALPRNIASKAAFENAMTLDIAMGGSTNTVLHLLAAAQEAEIDFTMSDIDKLSRKVPQLCKVAPSTQKYHMEDVHRAGGVIGILGELDRAGLLNRDVKNVLGLTLPQTLEQYDVMLTQDDAVKNMFRAGPAGIRTTQAFSQDCRWDTLDDDRANGCIRSLEHAYSKDGGLAVLYGNFAENGCIVKTAGVDDSILKFTGPAKVYESQDDAVEAILGGKVVAGDVVVIRYEGPKGGPGMQEMLYPTSFLKSMGLGKACALITDGRFSGGTSGLSIGHVSPEAASGGSIGLIEDGDLIAIDIPNRGIQLQVSDAELAARREAQEARGDKAWTPKNRERQVSFALRAYASLATSADKGAVRDKSKLGG.

D81 serves as a coordination point for Mg(2+). Residue C122 participates in [2Fe-2S] cluster binding. The Mg(2+) site is built by D123 and K124. K124 is modified (N6-carboxylysine). C195 is a [2Fe-2S] cluster binding site. A Mg(2+)-binding site is contributed by E491. S517 (proton acceptor) is an active-site residue.

Belongs to the IlvD/Edd family. In terms of assembly, homodimer. It depends on [2Fe-2S] cluster as a cofactor. Requires Mg(2+) as cofactor.

It catalyses the reaction (2R)-2,3-dihydroxy-3-methylbutanoate = 3-methyl-2-oxobutanoate + H2O. It carries out the reaction (2R,3R)-2,3-dihydroxy-3-methylpentanoate = (S)-3-methyl-2-oxopentanoate + H2O. Its pathway is amino-acid biosynthesis; L-isoleucine biosynthesis; L-isoleucine from 2-oxobutanoate: step 3/4. It participates in amino-acid biosynthesis; L-valine biosynthesis; L-valine from pyruvate: step 3/4. Its function is as follows. Functions in the biosynthesis of branched-chain amino acids. Catalyzes the dehydration of (2R,3R)-2,3-dihydroxy-3-methylpentanoate (2,3-dihydroxy-3-methylvalerate) into 2-oxo-3-methylpentanoate (2-oxo-3-methylvalerate) and of (2R)-2,3-dihydroxy-3-methylbutanoate (2,3-dihydroxyisovalerate) into 2-oxo-3-methylbutanoate (2-oxoisovalerate), the penultimate precursor to L-isoleucine and L-valine, respectively. This chain is Dihydroxy-acid dehydratase, found in Shigella boydii serotype 4 (strain Sb227).